The sequence spans 115 residues: Protein VCF2 (115 aa).

Basic residues predominate over residues 1–12 (MGGCPVRKRRRN). The tract at residues 1-70 (MGGCPVRKRR…GPEGNLNQIV (70 aa)) is disordered. Over residues 33 to 44 (FQDSQDTEFSWS) the composition is skewed to polar residues.

This sequence belongs to the VCF family.

In Homo sapiens (Human), this protein is Protein VCF2.